Here is a 137-residue protein sequence, read N- to C-terminus: AVCVSLLGASSIRPLPLHLGQFNNMIKCTIPGSTPWWDFSDYGCYCGYGGSGTPVDQLDRCCQTHDNCYTEAQKFSGCSPYRRKYSYECSEGTLTCKSDNDECAAFVCNCDRLAAICFAGAPYNSNNVDIDLEARCQ.

Residues 1-17 form the signal peptide; the sequence is AVCVSLLGASSIRPLPL. Cystine bridges form between Cys-28–Cys-89, Cys-44–Cys-136, Cys-46–Cys-62, Cys-61–Cys-117, Cys-68–Cys-110, Cys-78–Cys-103, and Cys-96–Cys-108. Ca(2+)-binding residues include Tyr-45, Gly-47, and Gly-49. Residue His-65 is part of the active site. Asp-66 contributes to the Ca(2+) binding site. Asp-111 is an active-site residue.

Requires Ca(2+) as cofactor. Expressed by the venom gland.

It is found in the secreted. The catalysed reaction is a 1,2-diacyl-sn-glycero-3-phosphocholine + H2O = a 1-acyl-sn-glycero-3-phosphocholine + a fatty acid + H(+). Functionally, snake venom phospholipase A2 (PLA2) that may act in the hemostasis system of the prey. Exhibits hydrolytic activities, and prefers the anionic micelles (dPPC with deoxycholate) (54 umol/mg/min) to the zwitterionic micelles (dPPC with Triton X-100) (15 umol/mg/min). PLA2 catalyzes the calcium-dependent hydrolysis of the 2-acyl groups in 3-sn-phosphoglycerides. This chain is Acidic phospholipase A2 PL-II, found in Walterinnesia aegyptia (Desert black snake).